Consider the following 190-residue polypeptide: Glutathione peroxidase 2 (190 aa).

U40 is an active-site residue. U40 is a non-standard amino acid (selenocysteine).

It belongs to the glutathione peroxidase family. As to quaternary structure, homotetramer.

It localises to the cytoplasm. Its subcellular location is the cytosol. It catalyses the reaction 2 glutathione + H2O2 = glutathione disulfide + 2 H2O. It carries out the reaction a hydroperoxy polyunsaturated fatty acid + 2 glutathione = a hydroxy polyunsaturated fatty acid + glutathione disulfide + H2O. The catalysed reaction is tert-butyl hydroperoxide + 2 glutathione = tert-butanol + glutathione disulfide + H2O. The enzyme catalyses cumene hydroperoxide + 2 glutathione = 2-phenylpropan-2-ol + glutathione disulfide + H2O. It catalyses the reaction (13S)-hydroperoxy-(9Z,11E)-octadecadienoate + 2 glutathione = (13S)-hydroxy-(9Z,11E)-octadecadienoate + glutathione disulfide + H2O. It carries out the reaction (5S)-hydroperoxy-(6E,8Z,11Z,14Z)-eicosatetraenoate + 2 glutathione = (5S)-hydroxy-(6E,8Z,11Z,14Z)-eicosatetraenoate + glutathione disulfide + H2O. The catalysed reaction is (12R)-hydroperoxy-(5Z,8Z,10E,14Z)-eicosatetraenoate + 2 glutathione = (12R)-hydroxy-(5Z,8Z,10E,14Z)-eicosatetraenoate + glutathione disulfide + H2O. The enzyme catalyses (15S)-hydroperoxy-(5Z,8Z,11Z,13E)-eicosatetraenoate + 2 glutathione = (15S)-hydroxy-(5Z,8Z,11Z,13E)-eicosatetraenoate + glutathione disulfide + H2O. Functionally, catalyzes the reduction of hydroperoxides in a glutathione-dependent manner thus regulating cellular redox homeostasis. Can reduce small soluble hydroperoxides such as H2O2, cumene hydroperoxide and tert-butyl hydroperoxide, as well as several fatty acid-derived hydroperoxides. Cannot reduce phosphatidycholine hydroperoxide. The chain is Glutathione peroxidase 2 (GPX2) from Pongo pygmaeus (Bornean orangutan).